Reading from the N-terminus, the 174-residue chain is Crossover junction endodeoxyribonuclease RuvC (174 aa).

Catalysis depends on residues Asp-16, Glu-76, and Asp-148. Residues Asp-16, Glu-76, and Asp-148 each contribute to the Mg(2+) site.

The protein belongs to the RuvC family. Homodimer which binds Holliday junction (HJ) DNA. The HJ becomes 2-fold symmetrical on binding to RuvC with unstacked arms; it has a different conformation from HJ DNA in complex with RuvA. In the full resolvosome a probable DNA-RuvA(4)-RuvB(12)-RuvC(2) complex forms which resolves the HJ. The cofactor is Mg(2+).

It localises to the cytoplasm. It carries out the reaction Endonucleolytic cleavage at a junction such as a reciprocal single-stranded crossover between two homologous DNA duplexes (Holliday junction).. Functionally, the RuvA-RuvB-RuvC complex processes Holliday junction (HJ) DNA during genetic recombination and DNA repair. Endonuclease that resolves HJ intermediates. Cleaves cruciform DNA by making single-stranded nicks across the HJ at symmetrical positions within the homologous arms, yielding a 5'-phosphate and a 3'-hydroxyl group; requires a central core of homology in the junction. The consensus cleavage sequence is 5'-(A/T)TT(C/G)-3'. Cleavage occurs on the 3'-side of the TT dinucleotide at the point of strand exchange. HJ branch migration catalyzed by RuvA-RuvB allows RuvC to scan DNA until it finds its consensus sequence, where it cleaves and resolves the cruciform DNA. This is Crossover junction endodeoxyribonuclease RuvC from Rhodopseudomonas palustris (strain ATCC BAA-98 / CGA009).